Reading from the N-terminus, the 254-residue chain is Thiazole synthase (254 aa).

Catalysis depends on Lys-93, which acts as the Schiff-base intermediate with DXP. 1-deoxy-D-xylulose 5-phosphate contacts are provided by residues Gly-154, 181 to 182 (AG), and 203 to 204 (NT).

The protein belongs to the ThiG family. In terms of assembly, homotetramer. Forms heterodimers with either ThiH or ThiS.

Its subcellular location is the cytoplasm. The enzyme catalyses [ThiS sulfur-carrier protein]-C-terminal-Gly-aminoethanethioate + 2-iminoacetate + 1-deoxy-D-xylulose 5-phosphate = [ThiS sulfur-carrier protein]-C-terminal Gly-Gly + 2-[(2R,5Z)-2-carboxy-4-methylthiazol-5(2H)-ylidene]ethyl phosphate + 2 H2O + H(+). Its pathway is cofactor biosynthesis; thiamine diphosphate biosynthesis. In terms of biological role, catalyzes the rearrangement of 1-deoxy-D-xylulose 5-phosphate (DXP) to produce the thiazole phosphate moiety of thiamine. Sulfur is provided by the thiocarboxylate moiety of the carrier protein ThiS. In vitro, sulfur can be provided by H(2)S. In Ruegeria pomeroyi (strain ATCC 700808 / DSM 15171 / DSS-3) (Silicibacter pomeroyi), this protein is Thiazole synthase.